We begin with the raw amino-acid sequence, 149 residues long: UPF0178 protein HEAR0259 (149 aa).

It belongs to the UPF0178 family.

In Herminiimonas arsenicoxydans, this protein is UPF0178 protein HEAR0259.